We begin with the raw amino-acid sequence, 344 residues long: Heat-inducible transcription repressor HrcA (344 aa).

It belongs to the HrcA family.

Functionally, negative regulator of class I heat shock genes (grpE-dnaK-dnaJ and groELS operons). Prevents heat-shock induction of these operons. This is Heat-inducible transcription repressor HrcA from Desulforudis audaxviator (strain MP104C).